We begin with the raw amino-acid sequence, 430 residues long: 3-phosphoshikimate 1-carboxyvinyltransferase (430 aa).

Residues K25, S26, and R30 each coordinate 3-phosphoshikimate. K25 is a binding site for phosphoenolpyruvate. G97 and R125 together coordinate phosphoenolpyruvate. 4 residues coordinate 3-phosphoshikimate: S170, Q172, D318, and K345. Residue Q172 participates in phosphoenolpyruvate binding. The active-site Proton acceptor is D318. Residues R349 and R391 each coordinate phosphoenolpyruvate.

It belongs to the EPSP synthase family. In terms of assembly, monomer.

The protein localises to the cytoplasm. The enzyme catalyses 3-phosphoshikimate + phosphoenolpyruvate = 5-O-(1-carboxyvinyl)-3-phosphoshikimate + phosphate. It participates in metabolic intermediate biosynthesis; chorismate biosynthesis; chorismate from D-erythrose 4-phosphate and phosphoenolpyruvate: step 6/7. Its function is as follows. Catalyzes the transfer of the enolpyruvyl moiety of phosphoenolpyruvate (PEP) to the 5-hydroxyl of shikimate-3-phosphate (S3P) to produce enolpyruvyl shikimate-3-phosphate and inorganic phosphate. This Shouchella clausii (strain KSM-K16) (Alkalihalobacillus clausii) protein is 3-phosphoshikimate 1-carboxyvinyltransferase.